The sequence spans 228 residues: HTH-type transcriptional activator FasR (228 aa).

Residues 1–39 are disordered; it reads MSDLAKTAQRRALRSSGSARPDEDVPAPNRRGNRLPRDE. The HTH tetR-type domain occupies 38–98; the sequence is DERRGQLLVV…AVLHRHVENL (61 aa). The H-T-H motif DNA-binding region spans 61–80; that stretch reads GMDEIADRAGVSKPVLYQHF.

In terms of assembly, homodimer.

FasR:DNA binding is regulated by long-chain acyl-CoAs (C14- to C26-CoA), which act as effector molecules that modulate the affinity of FasR for its DNA binding sequences and therefore modulate the expression of the essential fas-acpS operon. FasR activity is not affected by mycolic acid biosynthesis intermediates. Its function is as follows. Transcriptional activator that plays a central role in sensing mycobacterial long-chain fatty acids and regulating lipid biosynthesis. Activates the expression of the genes encoding the fatty acid synthase (fas) and the 4-phosphopantetheinyl transferase (acpS), whose products are involved in the fatty acid and mycolic acid biosynthesis. Specifically binds to three conserved operator sequences present in the fas-acpS promoter region. Not essential for M.tuberculosis viability, although it is required for the optimal growth in vitro and for virulence in macrophages and in a mouse model of infection. This Mycobacterium tuberculosis (strain ATCC 25618 / H37Rv) protein is HTH-type transcriptional activator FasR.